Consider the following 89-residue polypeptide: Small ribosomal subunit protein uS15 (89 aa).

This sequence belongs to the universal ribosomal protein uS15 family. As to quaternary structure, part of the 30S ribosomal subunit. Forms a bridge to the 50S subunit in the 70S ribosome, contacting the 23S rRNA.

Functionally, one of the primary rRNA binding proteins, it binds directly to 16S rRNA where it helps nucleate assembly of the platform of the 30S subunit by binding and bridging several RNA helices of the 16S rRNA. In terms of biological role, forms an intersubunit bridge (bridge B4) with the 23S rRNA of the 50S subunit in the ribosome. The protein is Small ribosomal subunit protein uS15 of Mycolicibacterium smegmatis (strain ATCC 700084 / mc(2)155) (Mycobacterium smegmatis).